Consider the following 1418-residue polypeptide: Sterol 3-beta-glucosyltransferase (1418 aa).

Residues 1 to 16 show a composition bias toward basic and acidic residues; sequence MRPFLDDAKRRVDRKL. Disordered stretches follow at residues 1 to 59, 83 to 188, and 207 to 233; these read MRPF…SREG, ARFD…RSAT, and LKASSTERSQPSLDESGEKGPRGASVS. Residues 18-28 are compositionally biased toward polar residues; sequence ASRQSLSTSRL. 2 stretches are compositionally biased toward basic and acidic residues: residues 35 to 44 and 95 to 105; these read DRLKDNHDAQ and SEQRPRKESSV. A compositionally biased stretch (polar residues) spans 106–115; it reads RKGTSASANT. Positions 116–126 are enriched in low complexity; that stretch reads SSPLDSSQRSS. Basic and acidic residues-rich tracts occupy residues 127-139 and 147-166; these read SRTDGKSEKESGT and TISDHKLFRPFESNSKHEPQ. Over residues 209-219 the composition is skewed to polar residues; sequence ASSTERSQPSL. One can recognise a GRAM 1 domain in the interval 249-288; sequence EKVLVEYACSLLQSILLQGYMYVTEGHICFYAYLPKKSTV. Positions 289–387 constitute a PH domain; the sequence is AIKSGYLYKR…WVKALQKVIF (99 aa). The interval 462–651 is disordered; that stretch reads ISSQHLSPQP…DPTKSFSGAP (190 aa). A compositionally biased stretch (polar residues) spans 486 to 497; that stretch reads RWSLTSGTSRVL. The span at 508 to 519 shows a compositional bias: low complexity; the sequence is ASASTSHTSLAH. The span at 534 to 575 shows a compositional bias: polar residues; that stretch reads SESILNSFEQGTESSAAWQSMTDAAESASQILNRSDVFQSPT. The segment covering 578-598 has biased composition (basic and acidic residues); that stretch reads GLDRRPSGGERRGRRNSDETA. Residues 599–612 are compositionally biased toward polar residues; that stretch reads RSLSTRANVGTGQQ. Basic and acidic residues predominate over residues 615-633; that stretch reads ELGRRMDGDTSGREARDST. Polar residues predominate over residues 635–651; sequence ESDQYTQDPTKSFSGAP. The 67-residue stretch at 733 to 799 folds into the GRAM 2 domain; sequence DRFRAHFALP…RDIENVEKEK (67 aa). UDP-alpha-D-glucose is bound by residues serine 920, arginine 921, aspartate 923, alanine 1223, histidine 1225, histidine 1238, glycine 1242, threonine 1243, aspartate 1262, and glutamine 1263. Positions 1339 to 1418 are disordered; the sequence is SIASSTPFSP…SGPGRKLSGR (80 aa). Over residues 1341 to 1355 the composition is skewed to low complexity; the sequence is ASSTPFSPTPSAKTT. Over residues 1358 to 1379 the composition is skewed to acidic residues; it reads QDADDDVEDSEEWTFVGDDTDM. Residues 1380–1391 are compositionally biased toward basic and acidic residues; sequence EMSRRLRDRAIS.

Belongs to the glycosyltransferase 28 family.

The protein localises to the cytoplasm. Its subcellular location is the preautophagosomal structure membrane. The enzyme catalyses a sterol + UDP-alpha-D-glucose = a sterol 3-beta-D-glucoside + UDP + H(+). The catalysed reaction is ergosterol + UDP-alpha-D-glucose = ergosteryl 3-beta-D-glucoside + UDP + H(+). Sterol glycosyltransferase responsible for the glycosylation of ergosterol to form ergosterol-glucoside. This is Sterol 3-beta-glucosyltransferase from Neosartorya fischeri (strain ATCC 1020 / DSM 3700 / CBS 544.65 / FGSC A1164 / JCM 1740 / NRRL 181 / WB 181) (Aspergillus fischerianus).